The following is a 202-amino-acid chain: Glycerol-3-phosphate acyltransferase (202 aa).

Helical transmembrane passes span 2-22 (ANLLFALAAYLIGSVSFAVVV), 82-102 (DTGLAMVALAVFLGHLFPVFH), 119-139 (AIDPILGLGTLATWLIIAFFF), and 158-178 (VLMNGVDVMAGAIFVISVLLI).

This sequence belongs to the PlsY family. As to quaternary structure, probably interacts with PlsX.

Its subcellular location is the cell inner membrane. It catalyses the reaction an acyl phosphate + sn-glycerol 3-phosphate = a 1-acyl-sn-glycero-3-phosphate + phosphate. The protein operates within lipid metabolism; phospholipid metabolism. Its function is as follows. Catalyzes the transfer of an acyl group from acyl-phosphate (acyl-PO(4)) to glycerol-3-phosphate (G3P) to form lysophosphatidic acid (LPA). This enzyme utilizes acyl-phosphate as fatty acyl donor, but not acyl-CoA or acyl-ACP. This chain is Glycerol-3-phosphate acyltransferase, found in Cupriavidus taiwanensis (strain DSM 17343 / BCRC 17206 / CCUG 44338 / CIP 107171 / LMG 19424 / R1) (Ralstonia taiwanensis (strain LMG 19424)).